The following is a 218-amino-acid chain: MFYSAAVAALMVGSASAFLAPAQFNSVAKSSGALSMKLGSSAEGLIGSDLELPEFDPLGFTNNPAPGALEWYRAAELKHGRVAMLAALGQLVQSFYHLPDPVFSESAKPWQALVKVCNERPLAAVQIGLAIFACEAIGQANQAKPGQAAGDLGWDPLNLRGSNEEIFERAQLRELKNGRLAMIAITAMIVQENLTGYGVIEAYRENAINPFGDGKGFF.

Residues Met1–Met36 constitute a chloroplast transit peptide.

It belongs to the fucoxanthin chlorophyll protein family. As to quaternary structure, the LHC complex of chromophytic algae is composed of fucoxanthin, chlorophyll A and C bound non-covalently by fucoxanthin chlorophyll proteins (FCPs). The ratio of pigments in this LHC is; fucoxanthin: chlorophyll C: chlorophyll A; (0.6-1): (0.1-0.3): (1).

It localises to the plastid. The protein localises to the chloroplast thylakoid membrane. Functionally, the light-harvesting complex (LHC) functions as a light receptor, it captures and delivers excitation energy to photosystems with which it is closely associated. Energy is transferred from the carotenoid and chlorophyll C (or B) to chlorophyll A and the photosynthetic reaction centers where it is used to synthesize ATP and reducing power. The sequence is that of Fucoxanthin-chlorophyll a-c binding protein, chloroplastic from Chattonella marina var. antiqua (Red tide flagellate).